The sequence spans 98 residues: Small ribosomal subunit protein eS24 (98 aa).

It belongs to the eukaryotic ribosomal protein eS24 family.

This Thermococcus sibiricus (strain DSM 12597 / MM 739) protein is Small ribosomal subunit protein eS24.